The sequence spans 128 residues: Phosphoribosyl-AMP cyclohydrolase (128 aa).

Aspartate 89 provides a ligand contact to Mg(2+). Cysteine 90 is a Zn(2+) binding site. Mg(2+) contacts are provided by aspartate 91 and aspartate 93. Residues cysteine 106 and cysteine 113 each contribute to the Zn(2+) site.

Belongs to the PRA-CH family. As to quaternary structure, homodimer. Mg(2+) serves as cofactor. It depends on Zn(2+) as a cofactor.

It localises to the cytoplasm. It catalyses the reaction 1-(5-phospho-beta-D-ribosyl)-5'-AMP + H2O = 1-(5-phospho-beta-D-ribosyl)-5-[(5-phospho-beta-D-ribosylamino)methylideneamino]imidazole-4-carboxamide. The protein operates within amino-acid biosynthesis; L-histidine biosynthesis; L-histidine from 5-phospho-alpha-D-ribose 1-diphosphate: step 3/9. Catalyzes the hydrolysis of the adenine ring of phosphoribosyl-AMP. The chain is Phosphoribosyl-AMP cyclohydrolase from Pyrobaculum calidifontis (strain DSM 21063 / JCM 11548 / VA1).